Here is a 120-residue protein sequence, read N- to C-terminus: NAD(P)H-quinone oxidoreductase subunit 3 (120 aa).

3 helical membrane passes run 10 to 32 (LLGF…KVLR), 64 to 84 (MFAL…PWAV), and 89 to 109 (LGVL…VGLV).

The protein belongs to the complex I subunit 3 family. NDH-1 can be composed of about 15 different subunits; different subcomplexes with different compositions have been identified which probably have different functions.

Its subcellular location is the cellular thylakoid membrane. It catalyses the reaction a plastoquinone + NADH + (n+1) H(+)(in) = a plastoquinol + NAD(+) + n H(+)(out). The enzyme catalyses a plastoquinone + NADPH + (n+1) H(+)(in) = a plastoquinol + NADP(+) + n H(+)(out). In terms of biological role, NDH-1 shuttles electrons from an unknown electron donor, via FMN and iron-sulfur (Fe-S) centers, to quinones in the respiratory and/or the photosynthetic chain. The immediate electron acceptor for the enzyme in this species is believed to be plastoquinone. Couples the redox reaction to proton translocation, and thus conserves the redox energy in a proton gradient. Cyanobacterial NDH-1 also plays a role in inorganic carbon-concentration. This is NAD(P)H-quinone oxidoreductase subunit 3 from Acaryochloris marina (strain MBIC 11017).